The primary structure comprises 488 residues: Envelope glycoprotein gp62 (488 aa).

The N-terminal stretch at 1–20 is a signal peptide; it reads MGKFLATLILFFQFCPLILG. Residues 21–442 are Extracellular-facing; sequence DYSPSCCTLT…LGLSQWAREA (422 aa). N-linked (GlcNAc...) asparagine; by host glycosylation is found at Asn-140 and Asn-222. The CXXC signature appears at 225 to 228; that stretch reads CIVC. 3 disulfide bridges follow: Cys-225/Cys-228, Cys-225/Cys-401, and Cys-393/Cys-400. Residues Asn-244 and Asn-272 are each glycosylated (N-linked (GlcNAc...) asparagine; by host). Positions 313–333 are fusion peptide; sequence AVPVAVWLVSALAMGAGVAGR. 2 coiled-coil regions span residues 341 to 387 and 397 to 429; these read ASGK…LLFW and QEQCCFLNITNSHVSILQERPPLENRVLTGWGL. Positions 376-392 are immunosuppression; it reads AQNRRGLDLLFWEQGGL. The short motif at 393-401 is the CX6CC element; the sequence is CKALQEQCC. N-linked (GlcNAc...) asparagine; by host glycosylation occurs at Asn-404. The helical transmembrane segment at 443–463 threads the bilayer; sequence LQTGITLVALLLLVILAGPCI. The S-palmitoyl cysteine; by host moiety is linked to residue Cys-462. Topologically, residues 464-488 are cytoplasmic; the sequence is LRQLRHLPSRVRYPHYSLINPESSL.

As to quaternary structure, the mature envelope protein (Env) consists of a trimer of SU-TM heterodimers attached by a labile interchain disulfide bond. In terms of processing, specific enzymatic cleavages in vivo yield mature proteins. Envelope glycoproteins are synthesized as an inactive precursor that is N-glycosylated and processed likely by host cell furin or by a furin-like protease in the Golgi to yield the mature SU and TM proteins. The cleavage site between SU and TM requires the minimal sequence [KR]-X-[KR]-R. Post-translationally, the CXXC motif is highly conserved across a broad range of retroviral envelope proteins. It is thought to participate in the formation of a labile disulfide bond possibly with the CX6CC motif present in the transmembrane protein. Isomerization of the intersubunit disulfide bond to an SU intrachain disulfide bond is thought to occur upon receptor recognition in order to allow membrane fusion. The transmembrane protein is palmitoylated.

The protein localises to the virion membrane. It localises to the host cell membrane. The surface protein (SU) attaches the virus to the host cell by binding to its receptor. This interaction triggers the refolding of the transmembrane protein (TM) and is thought to activate its fusogenic potential by unmasking its fusion peptide. Fusion occurs at the host cell plasma membrane. Its function is as follows. The transmembrane protein (TM) acts as a class I viral fusion protein. Under the current model, the protein has at least 3 conformational states: pre-fusion native state, pre-hairpin intermediate state, and post-fusion hairpin state. During viral and target cell membrane fusion, the coiled coil regions (heptad repeats) assume a trimer-of-hairpins structure, positioning the fusion peptide in close proximity to the C-terminal region of the ectodomain. The formation of this structure appears to drive apposition and subsequent fusion of viral and target cell membranes. Membranes fusion leads to delivery of the nucleocapsid into the cytoplasm. The chain is Envelope glycoprotein gp62 (env) from Homo sapiens (Human).